The primary structure comprises 390 residues: Na(+)/H(+) antiporter NhaA 2 (390 aa).

The next 11 helical transmembrane spans lie at 23 to 43 (IVLI…LAAA), 63 to 83 (LHLW…GLEI), 100 to 120 (LPVL…LAIT), 129 to 149 (GWAI…ALVG), 158 to 178 (LFLL…IALF), 181 to 201 (SGLK…LVLV), 208 to 228 (ALLP…HSGI), 265 to 285 (GFVI…GADF), 293 to 313 (LGIA…SILV), 331 to 351 (LWGI…IAGL), and 362 to 382 (EAKL…LLVL).

This sequence belongs to the NhaA Na(+)/H(+) (TC 2.A.33) antiporter family.

Its subcellular location is the cell inner membrane. The catalysed reaction is Na(+)(in) + 2 H(+)(out) = Na(+)(out) + 2 H(+)(in). Functionally, na(+)/H(+) antiporter that extrudes sodium in exchange for external protons. The protein is Na(+)/H(+) antiporter NhaA 2 of Novosphingobium aromaticivorans (strain ATCC 700278 / DSM 12444 / CCUG 56034 / CIP 105152 / NBRC 16084 / F199).